Here is an 836-residue protein sequence, read N- to C-terminus: TATA box-binding protein-associated factor RNA polymerase I subunit C (836 aa).

2 disordered regions span residues 662–683 (GDLSTLPRAEPPPAPQCSQQDE) and 703–836 (HRGE…RMGF). Residues 738–754 (DASSAPRSQDLSTSEAR) are compositionally biased toward polar residues. The span at 780–796 (RQTLRDHTDKLPLKRDT) shows a compositional bias: basic and acidic residues. Thr802 carries the phosphothreonine modification. Over residues 803-828 (PPSQASSLQTMSFRQQTPVHSGSQPP) the composition is skewed to polar residues.

In terms of assembly, component of the transcription factor SL1/TIF-IB complex, composed of TBP and at least TAF1A, TAF1B, TAF1C and TAF1D. In the complex interacts directly with TBP, TAF1A and TAF1B. Interaction of the SL1/TIF-IB subunits with TBP excludes interaction of TBP with the transcription factor IID (TFIID) subunits. Interacts with MYC and RRN3. Interacts with p53/TP53; the interaction prevents the association of SL1/TIF-IB with UBTF and represses RNA polymerase I transcription. Part of Pol I pre-initiation complex (PIC), in which Pol I core assembles with RRN3 and promoter-bound UTBF and SL1/TIF-IB complex.

Its subcellular location is the nucleus. The protein localises to the nucleolus. In terms of biological role, component of the transcription factor SL1/TIF-IB complex, which is involved in the assembly of the PIC (pre-initiation complex) during RNA polymerase I-dependent transcription. The rate of PIC formation probably is primarily dependent on the rate of association of SL1/TIF-IB with the rDNA promoter. SL1/TIF-IB is involved in stabilization of nucleolar transcription factor 1/UBTF on rDNA. Formation of SL1/TIF-IB excludes the association of TBP with TFIID subunits. Recruits RNA polymerase I to the rRNA gene promoter via interaction with RRN3. The polypeptide is TATA box-binding protein-associated factor RNA polymerase I subunit C (Taf1c) (Mus musculus (Mouse)).